The primary structure comprises 423 residues: Testican-2 (423 aa).

Residues 1–22 (MRAPGSGRLALPLLLLAVVALA) form the signal peptide. S72 is modified (phosphoserine). 5 disulfide bridges follow: C90–C101, C95–C111, C136–C166, C139–C159, and C148–C180. Positions 130–182 (GGKDSVCKPCHMAQLASVCGSDGHTYSSVCKLEQQACLSSKQLAVRCEGPCPC) constitute a Kazal-like domain. N-linked (GlcNAc...) asparagine glycosylation occurs at N225. The Thyroglobulin type-1 domain maps to 309-375 (KPPCLAELER…GTRMHGTPDC (67 aa)). 3 disulfide bridges follow: C312–C336, C347–C354, and C356–C375. S382 and S387 each carry an O-linked (Xyl...) (glycosaminoglycan) serine glycan. Residues 387–423 (SGVGWEDEEEKETEEAGEEAEEEEGEAGEADDGGYIW) are disordered. Residues 391-423 (WEDEEEKETEEAGEEAEEEEGEAGEADDGGYIW) are compositionally biased toward acidic residues.

O-glycosylated; contains chondroitin sulfate and heparan sulfate. Brain specific.

It localises to the secreted. The protein localises to the extracellular space. The protein resides in the extracellular matrix. Functionally, may participate in diverse steps of neurogenesis. Binds calcium. The sequence is that of Testican-2 (Spock2) from Mus musculus (Mouse).